Reading from the N-terminus, the 428-residue chain is Enolase (428 aa).

(2R)-2-phosphoglycerate is bound at residue Q162. E204 (proton donor) is an active-site residue. Mg(2+)-binding residues include D241, E283, and D310. K335, R364, S365, and K386 together coordinate (2R)-2-phosphoglycerate. Catalysis depends on K335, which acts as the Proton acceptor.

It belongs to the enolase family. It depends on Mg(2+) as a cofactor.

The protein resides in the cytoplasm. It is found in the secreted. The protein localises to the cell surface. It carries out the reaction (2R)-2-phosphoglycerate = phosphoenolpyruvate + H2O. It functions in the pathway carbohydrate degradation; glycolysis; pyruvate from D-glyceraldehyde 3-phosphate: step 4/5. In terms of biological role, catalyzes the reversible conversion of 2-phosphoglycerate (2-PG) into phosphoenolpyruvate (PEP). It is essential for the degradation of carbohydrates via glycolysis. This chain is Enolase, found in Rhodococcus erythropolis (strain PR4 / NBRC 100887).